The following is a 712-amino-acid chain: Ribosomal RNA large subunit methyltransferase K/L (712 aa).

Residues 46 to 157 (GAYQALLHSR…REKLIVSLDL (112 aa)) enclose the THUMP domain.

The protein belongs to the methyltransferase superfamily. RlmKL family.

The protein resides in the cytoplasm. The enzyme catalyses guanosine(2445) in 23S rRNA + S-adenosyl-L-methionine = N(2)-methylguanosine(2445) in 23S rRNA + S-adenosyl-L-homocysteine + H(+). It carries out the reaction guanosine(2069) in 23S rRNA + S-adenosyl-L-methionine = N(2)-methylguanosine(2069) in 23S rRNA + S-adenosyl-L-homocysteine + H(+). Specifically methylates the guanine in position 2445 (m2G2445) and the guanine in position 2069 (m7G2069) of 23S rRNA. In Haemophilus ducreyi (strain 35000HP / ATCC 700724), this protein is Ribosomal RNA large subunit methyltransferase K/L.